A 251-amino-acid chain; its full sequence is MVEDSQETTHFGFQTVAKEQKQDMVAHVFHSVAAKYDVMNDLMSFGIHRLWKRFTIDCSGVRRGQTVLDLAGGTGDLTAKFSRLVGETGRVMLADINDSMLKMGREKLRNIGIVGNVEYVQANAEALPFADNTFDCITISFGLRNVTDKEKALRSMYRVLKPGGRLLVLEFSKPIIEPLSKAYDAYSFHILPKVGELVAKDGDSYRYLAESIRMHPDQETLKGMMQDAGFESVDYHNLTAGIVALHRGYKF.

Residues threonine 74, aspartate 95, 123–124 (NA), and serine 140 each bind S-adenosyl-L-methionine.

This sequence belongs to the class I-like SAM-binding methyltransferase superfamily. MenG/UbiE family.

It carries out the reaction a 2-demethylmenaquinol + S-adenosyl-L-methionine = a menaquinol + S-adenosyl-L-homocysteine + H(+). The enzyme catalyses a 2-methoxy-6-(all-trans-polyprenyl)benzene-1,4-diol + S-adenosyl-L-methionine = a 5-methoxy-2-methyl-3-(all-trans-polyprenyl)benzene-1,4-diol + S-adenosyl-L-homocysteine + H(+). Its pathway is quinol/quinone metabolism; menaquinone biosynthesis; menaquinol from 1,4-dihydroxy-2-naphthoate: step 2/2. The protein operates within cofactor biosynthesis; ubiquinone biosynthesis. Its function is as follows. Methyltransferase required for the conversion of demethylmenaquinol (DMKH2) to menaquinol (MKH2) and the conversion of 2-polyprenyl-6-methoxy-1,4-benzoquinol (DDMQH2) to 2-polyprenyl-3-methyl-6-methoxy-1,4-benzoquinol (DMQH2). The sequence is that of Ubiquinone/menaquinone biosynthesis C-methyltransferase UbiE from Klebsiella pneumoniae (strain 342).